The chain runs to 1073 residues: Pharyngeal muscle protein 2 (1073 aa).

In terms of domain architecture, SAP spans 9-43 (INDLRVSELKTELEKRGLSTQGVKVVLTVRLNKAL). Disordered stretches follow at residues 59–186 (VSPM…PEVV), 207–305 (ELKE…SMET), and 337–388 (LLED…KSML). Acidic residues predominate over residues 91 to 111 (EGNDENVLVEEKEEEEEEEDS). Residues 112–127 (HDLQIIEDHELEVPSD) show a composition bias toward basic and acidic residues. Residues 128-151 (EKDDTLVEDEEFEEAEQVEPEPEA) are compositionally biased toward acidic residues. Composition is skewed to basic and acidic residues over residues 156–182 (VEEKPEEKLEEKPEEKLEEKPEEKPVE) and 207–217 (ELKEKPEKEPE). Composition is skewed to acidic residues over residues 223 to 232 (EPVEQLENEP) and 248 to 265 (QDGEDEFEEDDSSSDIEI). Residues 277–293 (AEEKVEKKEKKPEEIPH) are compositionally biased toward basic and acidic residues. Low complexity predominate over residues 366–386 (ASTPQATPSKAASSSAGSGKS). The region spanning 396-478 (TSIWIRGMTP…RVLRVEKVSE (83 aa)) is the RRM domain. Disordered stretches follow at residues 481-759 (LTSS…ERRR), 845-917 (QEHR…RNLV), and 1015-1073 (SQNA…RGNY). 2 stretches are compositionally biased toward low complexity: residues 496–505 (EAASTMSTSP) and 513–524 (PVVTTTTTTSAA). A compositionally biased stretch (basic and acidic residues) spans 573 to 587 (ITFDREEESNRDSRR). Residues 588–622 (TIAAAPPARTSRMARSPLRAPLRAARGSESSRSST) show a composition bias toward low complexity. Over residues 674–689 (VTVQQDAPRASYQTEQ) the composition is skewed to polar residues. 2 stretches are compositionally biased toward basic and acidic residues: residues 707–727 (VSPDRSEQRRHRDEPPPRRAP) and 742–759 (PPRRQEGARRSEEPERRR). Composition is skewed to low complexity over residues 901–917 (SSSNSNRNSNSGGRNLV), 1015–1026 (SQNAATPSTSTS), and 1034–1060 (QWQQQSYGSNQHQHHQNNNSSQPSSSN).

In terms of tissue distribution, expressed in most tissues including the hypodermal, muscle, neuronal, vulval and intestinal tissues. Isoform a: Expressed in the pharynx, nerve ring, intestine, neurons and ventral nerve cord.

Its subcellular location is the nucleus. In terms of biological role, involved in pharyngeal muscle development and ensures pharyngeal grinder function during feeding. Plays a role in the defense against the accumulation of ingested live pathogenic bacteria in the intestine. Has a role in the determination of life span. The sequence is that of Pharyngeal muscle protein 2 from Caenorhabditis elegans.